A 352-amino-acid chain; its full sequence is Putative GATA transcription factor 22 (352 aa).

The disordered stretch occupies residues 27 to 53 (SLHHHLQQQQQQQQHFHHQASSNPSSL). Over residues 33–53 (QQQQQQQQHFHHQASSNPSSL) the composition is skewed to low complexity. The Nuclear localization signal signature appears at 112-119 (PKKETRLK). Positions 163 to 189 (AIITTSDSSKQHTNNDQSSNLSNSERQ) are disordered. A compositionally biased stretch (polar residues) spans 165–189 (ITTSDSSKQHTNNDQSSNLSNSERQ). A GATA-type zinc finger spans residues 195–249 (DCVIRICSDCNTTKTPLWRSGPRGPKSLCNACGIRQRKARRAAMATATATAVSGV).

The protein belongs to the type IV zinc-finger family. Class B subfamily. Forms heterodimers with GATA18. As to expression, expressed predominantly in leaves, and barely in stems, flowers and siliques.

It is found in the nucleus. Transcriptional regulator that specifically binds 5'-GATA-3' or 5'-GAT-3' motifs within gene promoters. Involved in the modulation of chloroplast development, growth and division in a cytokinin-dependent manner. Repressor of the gibberellic acid (GA) signaling pathway that regulates flowering and modulates greening, in a SOC1-dependent manner. Prevents the accumulation of SOC1 during flowering. Promotes chlorophyll biosynthesis throughout the plant, by regulating chlorophyll biosynthetic genes (e.g. HEMA1 and GUN4) and chloroplast localized glutamate synthase (e.g. GLU1). Involved in the regulation of sugar-sensing genes (e.g. HXK1, HXK2, STP13 and PLT6). Regulator of germination, senescence, elongation growth and flowering time. Influences also leaf starch content. This is Putative GATA transcription factor 22 from Arabidopsis thaliana (Mouse-ear cress).